Here is a 171-residue protein sequence, read N- to C-terminus: Shikimate kinase (171 aa).

Residue 14 to 19 participates in ATP binding; sequence GAGKST. Residue serine 18 coordinates Mg(2+). Substrate-binding residues include aspartate 36, arginine 60, and glycine 82. Arginine 120 provides a ligand contact to ATP. Arginine 139 serves as a coordination point for substrate. Glutamine 156 is an ATP binding site.

The protein belongs to the shikimate kinase family. In terms of assembly, monomer. Requires Mg(2+) as cofactor.

It is found in the cytoplasm. It catalyses the reaction shikimate + ATP = 3-phosphoshikimate + ADP + H(+). Its pathway is metabolic intermediate biosynthesis; chorismate biosynthesis; chorismate from D-erythrose 4-phosphate and phosphoenolpyruvate: step 5/7. In terms of biological role, catalyzes the specific phosphorylation of the 3-hydroxyl group of shikimic acid using ATP as a cosubstrate. The protein is Shikimate kinase of Alteromonas mediterranea (strain DSM 17117 / CIP 110805 / LMG 28347 / Deep ecotype).